A 1015-amino-acid polypeptide reads, in one-letter code: DNA polymerase catalytic subunit (1015 aa).

This sequence belongs to the DNA polymerase type-B family. In terms of assembly, forms a complex with the ssDNA-binding protein BALF2, the DNA polymerase processivity factor BMRF1, and the alkaline exonuclease BGLF5. Interacts with the putative helicase-primase complex composed of BBLF4, BSLF1 and BBLF2/3 proteins; these interactions may coordinate leading and lagging strand DNA synthesis at the replication fork.

The protein localises to the host nucleus. It carries out the reaction DNA(n) + a 2'-deoxyribonucleoside 5'-triphosphate = DNA(n+1) + diphosphate. Functionally, replicates viral genomic DNA in the late phase of lytic infection, producing long concatemeric DNA. The replication complex is composed of six viral proteins: the DNA polymerase, processivity factor, primase, primase-associated factor, helicase, and ssDNA-binding protein. This is DNA polymerase catalytic subunit from Epstein-Barr virus (strain B95-8) (HHV-4).